The chain runs to 309 residues: Porphobilinogen deaminase (309 aa).

An S-(dipyrrolylmethanemethyl)cysteine modification is found at Cys-244.

It belongs to the HMBS family. In terms of assembly, monomer. Dipyrromethane is required as a cofactor.

It catalyses the reaction 4 porphobilinogen + H2O = hydroxymethylbilane + 4 NH4(+). It participates in porphyrin-containing compound metabolism; protoporphyrin-IX biosynthesis; coproporphyrinogen-III from 5-aminolevulinate: step 2/4. Functionally, tetrapolymerization of the monopyrrole PBG into the hydroxymethylbilane pre-uroporphyrinogen in several discrete steps. This is Porphobilinogen deaminase from Listeria innocua serovar 6a (strain ATCC BAA-680 / CLIP 11262).